The primary structure comprises 100 residues: Large ribosomal subunit protein uL23 (100 aa).

This sequence belongs to the universal ribosomal protein uL23 family. In terms of assembly, part of the 50S ribosomal subunit. Contacts protein L29, and trigger factor when it is bound to the ribosome.

One of the early assembly proteins it binds 23S rRNA. One of the proteins that surrounds the polypeptide exit tunnel on the outside of the ribosome. Forms the main docking site for trigger factor binding to the ribosome. This is Large ribosomal subunit protein uL23 from Bradyrhizobium diazoefficiens (strain JCM 10833 / BCRC 13528 / IAM 13628 / NBRC 14792 / USDA 110).